The sequence spans 439 residues: GTPase Der (439 aa).

EngA-type G domains lie at 2–168 (ATVL…EEKG) and 181–357 (IKVA…ASYT). GTP is bound by residues 8-15 (GKPNVGKS), 55-59 (DTCGV), 118-121 (NKTE), 187-194 (GRPNVGKS), 234-238 (DTAGL), and 300-303 (NKWD). The KH-like domain maps to 358–439 (TKVPSSAINS…PIFLKFKRSR (82 aa)).

It belongs to the TRAFAC class TrmE-Era-EngA-EngB-Septin-like GTPase superfamily. EngA (Der) GTPase family. In terms of assembly, associates with the 50S ribosomal subunit.

GTPase that plays an essential role in the late steps of ribosome biogenesis. This Thermotoga petrophila (strain ATCC BAA-488 / DSM 13995 / JCM 10881 / RKU-1) protein is GTPase Der.